Reading from the N-terminus, the 631-residue chain is Phosphomethylpyrimidine synthase (631 aa).

Residues Asn-239, Met-268, Tyr-297, His-333, 353–355 (SRG), 394–397 (DGLR), and Glu-433 each bind substrate. His-437 serves as a coordination point for Zn(2+). Tyr-460 lines the substrate pocket. Residue His-501 coordinates Zn(2+). [4Fe-4S] cluster is bound by residues Cys-581, Cys-584, and Cys-589.

The protein belongs to the ThiC family. In terms of assembly, homodimer. The cofactor is [4Fe-4S] cluster.

The catalysed reaction is 5-amino-1-(5-phospho-beta-D-ribosyl)imidazole + S-adenosyl-L-methionine = 4-amino-2-methyl-5-(phosphooxymethyl)pyrimidine + CO + 5'-deoxyadenosine + formate + L-methionine + 3 H(+). The protein operates within cofactor biosynthesis; thiamine diphosphate biosynthesis. In terms of biological role, catalyzes the synthesis of the hydroxymethylpyrimidine phosphate (HMP-P) moiety of thiamine from aminoimidazole ribotide (AIR) in a radical S-adenosyl-L-methionine (SAM)-dependent reaction. This is Phosphomethylpyrimidine synthase from Salmonella heidelberg (strain SL476).